The following is a 398-amino-acid chain: Streptopain (398 aa).

The N-terminal stretch at 1-27 is a signal peptide; sequence MNKKKLGVRLLSLLALGGFVLANPVFA. The propeptide occupies 28–145; sequence DQNFARNEKE…TTYAGTAEIK (118 aa). The Nucleophile role is filled by Cys-192. Cys-192 carries the cysteine methyl disulfide; in zymogen form modification. Positions 282 and 339 each coordinate a protein. The active-site Proton acceptor is His-340. The interval 368–390 is C-terminal active site loop; the sequence is RLDALNPSALGTGGGAGGFNGYQ.

Belongs to the peptidase C10 family. Monomer. Post-translationally, the mature protease is derived from the precursor sequence by cleavage, either in cis via an autocatalytic mechanism, or in trans by mature SpeB or host proteases (trypsin, plasmin or subtilisin). Maturation can involve a number of protein cleavage intermediates. Mature SpeB probably plays the most important role in protein maturation in physiological conditions. Methylthiolation at Cys-192 of the inactive zymogen form is probably involved in the mechanism of secretion of the proteinase into the culture fluid.

It localises to the secreted. The protein resides in the host extracellular space. It is found in the host cytoplasm. It carries out the reaction Preferential cleavage with hydrophobic residues at P2, P1 and P1'.. Synthesized as an inactive zymogen to protect the intracellular components of the bacteria from proteolytic activity during protein production. Once secreted into the extracellular milieu, cleaved into the active protease: maturation can be mediated in cis by autocatalytic cleavage, or in trans by mature SpeB or host proteases. Protease activity is strongly inhibited by zinc and copper, which prevent its maturation into an active protease: inhibition by metal ions may be required to prevent proteolysis of streptococcal proteins. In terms of biological role, cysteine protease that acts as a key streptococcal virulence factor by cleaving host proteins involved in immune response. Triggers inflammation by mediating cleavage of host proteins, which can both promote host pathogenesis by triggering sterile inflammation and/or restrict streptococcal infection, depending on host immune statue and infection site. Cleaves host gasdermin-A (GSDMA) in epithelial cells, promoting GSDMA activation and formation of gasdermin pores, triggering pyroptosis. Pyroptosis triggers the elimination of the infected skin cell, depriving the pathogen of its protective niche, while inducing an inflammatory response. This ultimately prevents bacterial penetration of the epithelial barrier and a subsequent systemic dissemination of the pathogen. Also mediates cleavage of the cytokine precursor interleukin-1 beta (IL1B) to its mature form, resulting in inflammation and septic shock. SpeB-mediated maturation of IL1B plays a dual role depending on infection site: while IL1B inflammatory response prevents bacterial growth during invasive skin infections, it promotes streptococcal infection of the nasopharynx by disrupting colonization resistance mediated by the microbiota. Inhibits host autophagy be catalyzing cleavage and inactivation of key autophagy factors, such as CALCOCO2, NBR1 and SQSTM1. Cleaves and inhibits a number of complement factors, such as C2, C3-beta chain of C3, C4, C5 or SERPING1, thereby promoting evasion of host immunity. May also impair adaptive immunity by catalyzing cleavage and degradation of host immunoglobulins to promote immune system evasion; the relevance of this activity is however unsure in vivo. Catalyzes maturation and release of the peptide hormone bradykinin from the precursor Kininogen-1 (KNG1) to produce hypotension during septic shock. Also involved in bacterial translocation across the host epithelial barrier by mediating cleavage and degradation of host epithelial junction proteins, such as CDH1 and OCLN. Additionally, has been involved in degradation of fibronectin and vitronectin, two host extracellular matrix proteins involved in tissue integrity. Also able to catalyze cleavage and degradation of streptococcal proteins, such as C5a peptidase, EndoS or SmeZ. Degradation of streptococcal proteins is however strictly regulated to preserve integrity of other virulence factors. The protein is Streptopain of Streptococcus pyogenes serotype M1.